The primary structure comprises 85 residues: High affinity immunoglobulin epsilon receptor subunit gamma (85 aa).

The signal sequence occupies residues 1–18 (MIPAVVLLLLLLVEQAAA). The Extracellular segment spans residues 19–23 (LGEPQ). A helical membrane pass occupies residues 24–44 (LCYILDAILFLYGIVLTLLYC). Residues 45-85 (RLKLQVRKAATASEKSDGIYTGLSTRTQETYETLKHEKPPQ) lie on the Cytoplasmic side of the membrane. Residues 53–81 (AATASEKSDGIYTGLSTRTQETYETLKHE) enclose the ITAM domain. A Phosphotyrosine modification is found at tyrosine 64. A Phosphoserine modification is found at serine 68. Tyrosine 75 carries the post-translational modification Phosphotyrosine. Threonine 77 is modified (phosphothreonine).

The protein belongs to the CD3Z/FCER1G family. As to quaternary structure, igE Fc receptor is a tetramer of an alpha chain, a beta chain, and two disulfide linked gamma chains. Associates with FCGR1A; forms a functional signaling complex. The signaling subunit of immunoglobulin gamma (IgG) Fc receptor complex. As a homodimer or a heterodimer of CD247 and FCER1G, associates with the ligand binding subunit FCGR3A to form a functional receptor complex. Associates with CLEC6A. Interacts with CLEC4E. Interacts (via ITAM domain) with SYK (via SH2 domains); activates SYK, enabling integrin-mediated activation of neutrophils and macrophages. Interacts with CSF2RB and recruits SYK in response to IL3 stimulation; this interaction is direct. Interacts with CD300LH; the interaction may be indirect. Interacts with CD300LD. Interacts with TARM1.

The protein resides in the cell membrane. In terms of biological role, adapter protein containing an immunoreceptor tyrosine-based activation motif (ITAM) that transduces activation signals from various immunoreceptors. As a component of the high-affinity immunoglobulin E (IgE) receptor, mediates allergic inflammatory signaling in mast cells. As a constitutive component of interleukin-3 receptor complex, selectively mediates interleukin 4/IL4 production by basophils priming T-cells toward effector T-helper 2 subset. Associates with pattern recognition receptors CLEC4D and CLEC4E to form a functional signaling complex in myeloid cells. Binding of mycobacterial trehalose 6,6'-dimycolate (TDM) to this receptor complex leads to phosphorylation of ITAM, triggering activation of SYK, CARD9 and NF-kappa-B, consequently driving maturation of antigen-presenting cells and shaping antigen-specific priming of T-cells toward effector T-helper 1 and T-helper 17 cell subtypes. May function cooperatively with other activating receptors. Functionally linked to integrin beta-2/ITGB2-mediated neutrophil activation. Also involved in integrin alpha-2/ITGA2-mediated platelet activation. The sequence is that of High affinity immunoglobulin epsilon receptor subunit gamma (FCER1G) from Bos taurus (Bovine).